A 61-amino-acid polypeptide reads, in one-letter code: Large ribosomal subunit protein bL28 (61 aa).

It belongs to the bacterial ribosomal protein bL28 family.

This Nocardioides sp. (strain ATCC BAA-499 / JS614) protein is Large ribosomal subunit protein bL28.